Consider the following 780-residue polypeptide: MKPQMFFRSVIQFYSKPSWMQRSYSSGNAEFNISGEVISILAKKKPIEPALEPLVPFLSKNIITSVIKDEVNRQLGFRFFIWASRRERLRSRESFGLVIDMLSEDNGCDLYWQTLEELKSGGVSVDSYCFCVLISAYAKMGMAEKAVESFGRMKEFDCRPDVFTYNVILRVMMREEVFFMLAFAVYNEMLKCNCSPNLYTFGILMDGLYKKGRTSDAQKMFDDMTGRGISPNRVTYTILISGLCQRGSADDARKLFYEMQTSGNYPDSVAHNALLDGFCKLGRMVEAFELLRLFEKDGFVLGLRGYSSLIDGLFRARRYTQAFELYANMLKKNIKPDIILYTILIQGLSKAGKIEDALKLLSSMPSKGISPDTYCYNAVIKALCGRGLLEEGRSLQLEMSETESFPDACTHTILICSMCRNGLVREAEEIFTEIEKSGCSPSVATFNALIDGLCKSGELKEARLLLHKMEVGRPASLFLRLSHSGNRSFDTMVESGSILKAYRDLAHFADTGSSPDIVSYNVLINGFCRAGDIDGALKLLNVLQLKGLSPDSVTYNTLINGLHRVGREEEAFKLFYAKDDFRHSPAVYRSLMTWSCRKRKVLVAFNLWMKYLKKISCLDDETANEIEQCFKEGETERALRRLIELDTRKDELTLGPYTIWLIGLCQSGRFHEALMVFSVLREKKILVTPPSCVKLIHGLCKREQLDAAIEVFLYTLDNNFKLMPRVCNYLLSSLLESTEKMEIVSQLTNRMERAGYNVDSMLRFEILKYHRHRKQVLIDL.

17 PPR repeats span residues 91 to 125 (SRES…GVSV), 126 to 160 (DSYC…DCRP), 161 to 196 (DVFT…NCSP), 197 to 231 (NLYT…GISP), 232 to 266 (NRVT…GNYP), 267 to 301 (DSVA…GFVL), 302 to 336 (GLRG…NIKP), 337 to 371 (DIIL…GISP), 372 to 406 (DTYC…ESFP), 407 to 441 (DACT…GCSP), 442 to 476 (SVAT…RPAS), 481 to 515 (LSHS…GSSP), 516 to 550 (DIVS…GLSP), 551 to 585 (DSVT…RHSP), 653 to 687 (TLGP…KILV), 688 to 722 (TPPS…NFKL), and 723 to 758 (MPRV…GYNV).

The protein belongs to the PPR family. P subfamily.

The polypeptide is Pentatricopeptide repeat-containing protein At1g79540 (Arabidopsis thaliana (Mouse-ear cress)).